Here is a 389-residue protein sequence, read N- to C-terminus: Na(+)/H(+) antiporter NhaA (389 aa).

Helical transmembrane passes span 17–37 (ILLL…LAGL), 59–79 (LLLW…GLEV), 95–115 (SLPT…YLLF), 124–144 (VGWA…MALL), 154–174 (VFLL…IALF), 177–197 (SDLS…LVAL), 213–233 (LVLW…GVII), 261–281 (FLIL…NMSL), 287–307 (PVPV…VMLF), 328–348 (IAPV…IASL), and 363–383 (LGTL…LSKV).

The protein belongs to the NhaA Na(+)/H(+) (TC 2.A.33) antiporter family.

Its subcellular location is the cell inner membrane. It carries out the reaction Na(+)(in) + 2 H(+)(out) = Na(+)(out) + 2 H(+)(in). Its function is as follows. Na(+)/H(+) antiporter that extrudes sodium in exchange for external protons. The sequence is that of Na(+)/H(+) antiporter NhaA from Shewanella sp. (strain ANA-3).